Here is a 137-residue protein sequence, read N- to C-terminus: Putative pre-16S rRNA nuclease (137 aa).

The protein belongs to the YqgF nuclease family.

It is found in the cytoplasm. In terms of biological role, could be a nuclease involved in processing of the 5'-end of pre-16S rRNA. The sequence is that of Putative pre-16S rRNA nuclease from Desulforamulus reducens (strain ATCC BAA-1160 / DSM 100696 / MI-1) (Desulfotomaculum reducens).